A 568-amino-acid polypeptide reads, in one-letter code: Urease subunit beta (568 aa).

Residues 131-568 (GGIDTHIHFI…LSLAQLYNLF (438 aa)) enclose the Urease domain. Residues His-136, His-138, and Lys-219 each coordinate Ni(2+). N6-carboxylysine is present on Lys-219. His-221 is a substrate binding site. 2 residues coordinate Ni(2+): His-248 and His-274. Catalysis depends on His-321, which acts as the Proton donor. Asp-361 lines the Ni(2+) pocket.

The protein belongs to the metallo-dependent hydrolases superfamily. Urease alpha subunit family. Heterohexamer of 3 UreA (alpha) and 3 UreB (beta) subunits. Requires Ni cation as cofactor. Post-translationally, carboxylation allows a single lysine to coordinate two nickel ions.

It is found in the cytoplasm. It catalyses the reaction urea + 2 H2O + H(+) = hydrogencarbonate + 2 NH4(+). It participates in nitrogen metabolism; urea degradation; CO(2) and NH(3) from urea (urease route): step 1/1. The chain is Urease subunit beta from Helicobacter heilmannii.